The sequence spans 126 residues: 3-isopropylmalate dehydrogenase (126 aa).

Residues aspartate 14 and aspartate 18 each contribute to the Mg(2+) site. 48-60 (GSAPDIAGKNIAN) lines the NAD(+) pocket.

Belongs to the isocitrate and isopropylmalate dehydrogenases family. LeuB type 1 subfamily. In terms of assembly, homodimer. Mg(2+) serves as cofactor. Requires Mn(2+) as cofactor.

It localises to the cytoplasm. It catalyses the reaction (2R,3S)-3-isopropylmalate + NAD(+) = 4-methyl-2-oxopentanoate + CO2 + NADH. The protein operates within amino-acid biosynthesis; L-leucine biosynthesis; L-leucine from 3-methyl-2-oxobutanoate: step 3/4. Catalyzes the oxidation of 3-carboxy-2-hydroxy-4-methylpentanoate (3-isopropylmalate) to 3-carboxy-4-methyl-2-oxopentanoate. The product decarboxylates to 4-methyl-2 oxopentanoate. The protein is 3-isopropylmalate dehydrogenase (leuB) of Buchnera aphidicola subsp. Uroleucon rurale.